The sequence spans 194 residues: Probable GTP-binding protein EngB (194 aa).

The 173-residue stretch at Asp22–Glu194 folds into the EngB-type G domain. Residues Gly30–Ser37, Gly57–Thr61, Asp75–Gly78, Thr142–Asp145, and Phe174–Ser176 contribute to the GTP site. Ser37 and Thr59 together coordinate Mg(2+).

The protein belongs to the TRAFAC class TrmE-Era-EngA-EngB-Septin-like GTPase superfamily. EngB GTPase family. It depends on Mg(2+) as a cofactor.

In terms of biological role, necessary for normal cell division and for the maintenance of normal septation. The protein is Probable GTP-binding protein EngB of Listeria monocytogenes serovar 1/2a (strain ATCC BAA-679 / EGD-e).